Reading from the N-terminus, the 369-residue chain is Zeaxanthin 7,8(7',8')-cleavage dioxygenase, chromoplastic (369 aa).

Fe cation contacts are provided by histidine 62, histidine 112, histidine 177, and histidine 356.

The protein belongs to the carotenoid oxygenase family. It depends on Fe(2+) as a cofactor. As to expression, in the style branches.

It is found in the plastid. It localises to the chromoplast. The catalysed reaction is all-trans-zeaxanthin + 2 O2 = crocetin dialdehyde + 2 3beta-hydroxy-beta-cyclocitral. Functionally, cleaves zeaxanthin symmetrically at the 7-8 and 7'-8' double bonds to produce crocetin dialdehyde and hydroxy-beta-cyclocitral, two water-soluble precursors sequestred in vacuoles and involved in the synthesis of saffron pigment and aroma. The polypeptide is Zeaxanthin 7,8(7',8')-cleavage dioxygenase, chromoplastic (ZCD) (Crocus sativus (Saffron)).